A 354-amino-acid polypeptide reads, in one-letter code: Uroporphyrinogen decarboxylase (354 aa).

Substrate-binding positions include 27-31 (RQAGR), Asp77, Tyr154, Thr209, and His327.

Belongs to the uroporphyrinogen decarboxylase family. As to quaternary structure, homodimer.

Its subcellular location is the cytoplasm. The catalysed reaction is uroporphyrinogen III + 4 H(+) = coproporphyrinogen III + 4 CO2. Its pathway is porphyrin-containing compound metabolism; protoporphyrin-IX biosynthesis; coproporphyrinogen-III from 5-aminolevulinate: step 4/4. Functionally, catalyzes the decarboxylation of four acetate groups of uroporphyrinogen-III to yield coproporphyrinogen-III. This Salmonella agona (strain SL483) protein is Uroporphyrinogen decarboxylase.